Reading from the N-terminus, the 1004-residue chain is Caspase recruitment domain-containing protein 14 (1004 aa).

The 93-residue stretch at 15-107 (DEETLWEMME…DVYTLVTGLQ (93 aa)) folds into the CARD domain. Positions 128–409 (LAGAIGSLQE…RTQLRQLQAE (282 aa)) form a coiled coil. The interval 409–568 (EPPGVLKQEA…RRPARRILSQ (160 aa)) is maintains the protein in an inactive state. Serine 544 bears the Phosphoserine mark. Residues 568 to 658 (QVTMLAFQGD…FCCLSVKVNT (91 aa)) enclose the PDZ domain. Residues 807-990 (AESCLTLVPY…LLSCVRQAIA (184 aa)) enclose the Guanylate kinase-like domain.

As to quaternary structure, interacts (via CARD domain) with BCL10 (via CARD domain). Forms a complex with MALT1 and BCL10; resulting in the formation of a CBM (CARD14-BLC10-MALT1) complex. Interacts with TRAF2, TRAF3 and TRAF6. As to expression, isoform 1 is detected in placenta and epidermal keratinocytes. Isoform 2 is detected in leukocytes and fetal brain.

The protein resides in the cytoplasm. In terms of biological role, acts as a scaffolding protein that can activate the inflammatory transcription factor NF-kappa-B and p38/JNK MAP kinase signaling pathways. Forms a signaling complex with BCL10 and MALT1, and activates MALT1 proteolytic activity and inflammatory gene expression. MALT1 is indispensable for CARD14-induced activation of NF-kappa-B and p38/JNK MAP kinases. May play a role in signaling mediated by TRAF2, TRAF3 and TRAF6 and protects cells against apoptosis. Not able to activate the inflammatory transcription factor NF-kappa-B and may function as a dominant negative regulator. The sequence is that of Caspase recruitment domain-containing protein 14 (CARD14) from Homo sapiens (Human).